We begin with the raw amino-acid sequence, 188 residues long: ATP synthase subunit b (188 aa).

A helical membrane pass occupies residues 24–44; the sequence is LPASYDIVWSLVVFIIVLILF.

Belongs to the ATPase B chain family. F-type ATPases have 2 components, F(1) - the catalytic core - and F(0) - the membrane proton channel. F(1) has five subunits: alpha(3), beta(3), gamma(1), delta(1), epsilon(1). F(0) has three main subunits: a(1), b(2) and c(10-14). The alpha and beta chains form an alternating ring which encloses part of the gamma chain. F(1) is attached to F(0) by a central stalk formed by the gamma and epsilon chains, while a peripheral stalk is formed by the delta and b chains.

Its subcellular location is the cell membrane. In terms of biological role, f(1)F(0) ATP synthase produces ATP from ADP in the presence of a proton or sodium gradient. F-type ATPases consist of two structural domains, F(1) containing the extramembraneous catalytic core and F(0) containing the membrane proton channel, linked together by a central stalk and a peripheral stalk. During catalysis, ATP synthesis in the catalytic domain of F(1) is coupled via a rotary mechanism of the central stalk subunits to proton translocation. Functionally, component of the F(0) channel, it forms part of the peripheral stalk, linking F(1) to F(0). The chain is ATP synthase subunit b from Corynebacterium diphtheriae (strain ATCC 700971 / NCTC 13129 / Biotype gravis).